The primary structure comprises 1045 residues: Septation initiation network scaffold protein cdc11 (1045 aa).

Residues 1 to 11 (MEQLWLEHDLS) are compositionally biased toward basic and acidic residues. 2 disordered regions span residues 1-269 (MEQL…NTKD) and 282-329 (RGRM…PSLS). Positions 18-39 (PQEQGSDNSSEPPTTSNVNNTQ) are enriched in polar residues. Composition is skewed to low complexity over residues 40–52 (STGR…STEH), 96–132 (KQSP…NVSN), and 152–165 (ISSS…SEGS). A compositionally biased stretch (polar residues) spans 166 to 176 (LKSQQSNTRSN). Low complexity predominate over residues 187–201 (ASNASSSSSVVSSPS). Polar residues-rich tracts occupy residues 226-238 (NQLT…NSFE) and 320-329 (DSSNAFPSLS). Position 360 is a phosphoserine (Ser360). The interval 377-417 (DVGSSQSSSKTARLNSSPKSTLKTSSVKTRRSHSAQSSRKV) is disordered. Polar residues predominate over residues 379-403 (GSSQSSSKTARLNSSPKSTLKTSSV). Residue Ser558 is modified to Phosphoserine. 15 LRR repeats span residues 604–625 (RIIQ…SELC), 627–646 (SIEE…GCPV), 647–668 (TIRD…SNLL), 669–690 (NLQY…SSLI), 691–712 (HLRE…QHLD), 713–734 (GLLK…NSNL), 736–757 (RLEE…SSLQ), 758–779 (NLMV…QPMI), 780–801 (HLRI…QFPH), 802–822 (LRTL…RRLK), 846–867 (DIRN…HMFL), 868–889 (GVRY…IATS), 892–913 (NLRV…KPLQ), 914–935 (MIHR…CDIL), and 940–962 (QLNV…IDDS). Residues 1005-1043 (AWRTRRKMYAEAILLACPHLEWLDGSDVSQSSRAAFTKS) form the LRRCT domain.

In terms of assembly, interacts with sid4. When hyperphosphorylated, interacts with byr4. Also interacts with spg1, sid2, cdc13 and cdc16. In terms of processing, phosphorylated by cdc7 and cdk1. Hyperphosphorylated during anaphase. Dephosphorylated by par1.

Its subcellular location is the cytoplasm. It is found in the cytoskeleton. The protein resides in the microtubule organizing center. The protein localises to the spindle pole body. Its function is as follows. Essential for the onset of septum formation. Involved in the organization of astral microtubules during mitosis. Acts as a bridge between sid4 and the other SIN proteins mediating their association with the spindle pole body (SPB). The sid4-cdc11 complex organizes a signaling hub on the SPB which coordinates cell and nuclear division. In Schizosaccharomyces pombe (strain 972 / ATCC 24843) (Fission yeast), this protein is Septation initiation network scaffold protein cdc11 (cdc11).